Consider the following 501-residue polypeptide: MAINAQEISALIKQQIENFQPDFDVTETGVVTYVGDGIARAHGLDNAMSGELLVFENGSYGMAQNLESNDVGIIILGDFTDIREGDTIRRTGKIMEVPVGEALIGRVVDPLGRPVDGLGEIATDKTRPVETPAPGVMQRKSVSEPLQTGLKAIDALVPIGRGQRELIIGDRQTGKTTIAIDAILNQKGQDMICIYVAIGQKESTVRTQVETLRQYGALDYTIVVTASASQPSPLLYLAPYAGVAMAEEFMYNGKHVLIVYDDLSKQAVAYRELSLLLRRPPGREAFPGDVFYLHSRLLERSAKVSDELGGGSITALPFIETQAGDISAYIATNVISITDGQIFLSDGLFNGGVRPAIDAGSSVSRVGGSAQIKAMKKVAGTLRIDLASYRELEAFTKFGSDLDAATQAKLNRGRRTVEVLKQPVHKPLPVEKQVVILYALTHGFLDSVPVDDILRFEEELFAYFDAHQEGIYETIRTTKDLPSEEVLDAAITEFVNQSSFK.

An ATP-binding site is contributed by 169-176; the sequence is GDRQTGKT.

Belongs to the ATPase alpha/beta chains family. F-type ATPases have 2 components, CF(1) - the catalytic core - and CF(0) - the membrane proton channel. CF(1) has five subunits: alpha(3), beta(3), gamma(1), delta(1), epsilon(1). CF(0) has three main subunits: a(1), b(2) and c(9-12). The alpha and beta chains form an alternating ring which encloses part of the gamma chain. CF(1) is attached to CF(0) by a central stalk formed by the gamma and epsilon chains, while a peripheral stalk is formed by the delta and b chains.

The protein resides in the cell membrane. It catalyses the reaction ATP + H2O + 4 H(+)(in) = ADP + phosphate + 5 H(+)(out). In terms of biological role, produces ATP from ADP in the presence of a proton gradient across the membrane. The alpha chain is a regulatory subunit. The protein is ATP synthase subunit alpha of Streptococcus gordonii (strain Challis / ATCC 35105 / BCRC 15272 / CH1 / DL1 / V288).